A 644-amino-acid polypeptide reads, in one-letter code: DNA mismatch repair protein MutL (644 aa).

The segment at 336 to 356 (KRNINPLNRDDKTKDKSEYQK) is disordered. The segment covering 343-356 (NRDDKTKDKSEYQK) has biased composition (basic and acidic residues).

It belongs to the DNA mismatch repair MutL/HexB family.

In terms of biological role, this protein is involved in the repair of mismatches in DNA. It is required for dam-dependent methyl-directed DNA mismatch repair. May act as a 'molecular matchmaker', a protein that promotes the formation of a stable complex between two or more DNA-binding proteins in an ATP-dependent manner without itself being part of a final effector complex. This Halothermothrix orenii (strain H 168 / OCM 544 / DSM 9562) protein is DNA mismatch repair protein MutL.